The primary structure comprises 217 residues: Probable transaldolase (217 aa).

Catalysis depends on Lys-83, which acts as the Schiff-base intermediate with substrate.

The protein belongs to the transaldolase family. Type 3B subfamily.

Its subcellular location is the cytoplasm. The enzyme catalyses D-sedoheptulose 7-phosphate + D-glyceraldehyde 3-phosphate = D-erythrose 4-phosphate + beta-D-fructose 6-phosphate. Its pathway is carbohydrate degradation; pentose phosphate pathway; D-glyceraldehyde 3-phosphate and beta-D-fructose 6-phosphate from D-ribose 5-phosphate and D-xylulose 5-phosphate (non-oxidative stage): step 2/3. In terms of biological role, transaldolase is important for the balance of metabolites in the pentose-phosphate pathway. This Sinorhizobium medicae (strain WSM419) (Ensifer medicae) protein is Probable transaldolase.